A 445-amino-acid chain; its full sequence is Phosphoglucosamine mutase (445 aa).

Ser-102 functions as the Phosphoserine intermediate in the catalytic mechanism. Mg(2+)-binding residues include Ser-102, Asp-241, Asp-243, and Asp-245. The residue at position 102 (Ser-102) is a Phosphoserine.

The protein belongs to the phosphohexose mutase family. Requires Mg(2+) as cofactor. Post-translationally, activated by phosphorylation.

It catalyses the reaction alpha-D-glucosamine 1-phosphate = D-glucosamine 6-phosphate. Functionally, catalyzes the conversion of glucosamine-6-phosphate to glucosamine-1-phosphate. The chain is Phosphoglucosamine mutase from Edwardsiella ictaluri (strain 93-146).